The following is a 118-amino-acid chain: Melanoma antigen recognized by T-cells 1 (118 aa).

A helical transmembrane segment spans residues 27–47 (AAGIGILTVILGVLLLIGCWY). At 48–118 (CRRRNGYRAL…AEQSPPPYSP (71 aa)) the chain is on the cytoplasmic side. Residues 78-118 (GFDHRDSKVSLQEKNCEPVVPNAPPAYEKLSAEQSPPPYSP) are disordered. The residue at position 108 (serine 108) is a Phosphoserine.

As to quaternary structure, interacts with PMEL. Interacts with GPR143. Post-translationally, acylated. As to expression, expression is restricted to melanoma and melanocyte cell lines and retina.

It localises to the endoplasmic reticulum membrane. It is found in the golgi apparatus. The protein localises to the trans-Golgi network membrane. The protein resides in the melanosome. Involved in melanosome biogenesis by ensuring the stability of GPR143. Plays a vital role in the expression, stability, trafficking, and processing of melanocyte protein PMEL, which is critical to the formation of stage II melanosomes. The polypeptide is Melanoma antigen recognized by T-cells 1 (MLANA) (Homo sapiens (Human)).